The sequence spans 199 residues: Probable nicotinate-nucleotide adenylyltransferase (199 aa).

Belongs to the NadD family.

The enzyme catalyses nicotinate beta-D-ribonucleotide + ATP + H(+) = deamido-NAD(+) + diphosphate. Its pathway is cofactor biosynthesis; NAD(+) biosynthesis; deamido-NAD(+) from nicotinate D-ribonucleotide: step 1/1. In terms of biological role, catalyzes the reversible adenylation of nicotinate mononucleotide (NaMN) to nicotinic acid adenine dinucleotide (NaAD). The chain is Probable nicotinate-nucleotide adenylyltransferase from Chloroherpeton thalassium (strain ATCC 35110 / GB-78).